The chain runs to 417 residues: MIQVLLVTICLAALPYQGSSIMLESGKVNDYEVVYPQRLAPLPEGAVQQKYEDTMQYEFKVNGETIVLHLEKNKGLFSKDYSETHYSPDGRKITTYPSVEDHCYYHGRIENYEDSTASISACNGLKGHFKIQGETYFIESLKLSDSEAHAVLKYENVGKEDETHQICGVTLNWKSYDPIKRPSRLNLTPKQQTWPQTSVNLQLIVDHSMYAKYNSNSEKITKTVQERVNIMKEIFKPLNFDITLSGIEMWDKKDLITVKTAATDTLKLFAKWRQTDLLKRIDNDNAQLQTAVDFDGETVGLAFKSTMCDKRYSAGIIQDHSAIPLLMAVTIAHELGHNLGMDHDDTSKCNCNVCIMAPRLNTNPSKTFSDCSNNDYQKFLTDKKPKCIHKKSLKTDTVSTSVSGNEPLDDNVDGFHA.

An N-terminal signal peptide occupies residues 1–20 (MIQVLLVTICLAALPYQGSS). The propeptide at 21-189 (IMLESGKVND…KRPSRLNLTP (169 aa)) is activation peptide. Residues 197–392 (TSVNLQLIVD…KKPKCIHKKS (196 aa)) enclose the Peptidase M12B domain. Cystine bridges form between cysteine 308/cysteine 387, cysteine 349/cysteine 371, and cysteine 351/cysteine 354. Zn(2+) is bound at residue histidine 333. Glutamate 334 is an active-site residue. The Zn(2+) site is built by histidine 337 and histidine 343. The propeptide occupies 393 to 417 (LKTDTVSTSVSGNEPLDDNVDGFHA). The segment at 398-417 (VSTSVSGNEPLDDNVDGFHA) is disordered. A compositionally biased stretch (acidic residues) spans 407 to 417 (PLDDNVDGFHA).

It belongs to the venom metalloproteinase (M12B) family. P-I subfamily. As to quaternary structure, monomer. Requires Zn(2+) as cofactor. In terms of tissue distribution, expressed by the venom gland.

The protein resides in the secreted. Functionally, this protein is an alkaline zinc metalloprotease from snake venom that possesses weak hemorrhagic activity. This is Snake venom metalloproteinase acutolysin-C from Deinagkistrodon acutus (Hundred-pace snake).